A 257-amino-acid chain; its full sequence is Outer dense fiber protein 4 (257 aa).

Residues 1–41 (MDAEYSGNEFPRSEGERDQHQRPGKERKSGEAGWGTGELGQ) are disordered. Residues 11–30 (PRSEGERDQHQRPGKERKSG) are compositionally biased toward basic and acidic residues. Ser64 is subject to Phosphoserine. 3 helical membrane-spanning segments follow: residues 80 to 100 (AQVLASELSLVAFILLLVVAF), 152 to 172 (VTFIFSTLMLFPINIWIFELE), and 179 to 199 (IGWSYFIGWLVLILYFTCAIL).

Expressed in testis and sperm; especially localized to sperm tail (at protein level).

Its subcellular location is the membrane. In terms of biological role, component of the outer dense fibers (ODF) of spermatozoa which could be involved in sperm tail structure, sperm movement and general organization of cellular cytoskeleton. The sequence is that of Outer dense fiber protein 4 (ODF4) from Homo sapiens (Human).